Here is a 338-residue protein sequence, read N- to C-terminus: Holliday junction branch migration complex subunit RuvB (338 aa).

The interval 4 to 185 (EDQKILDAKP…FGIVAHMQFY (182 aa)) is large ATPase domain (RuvB-L). Residues Leu-24, Arg-25, Gly-66, Lys-69, Thr-70, Thr-71, 132 to 134 (EDF), Arg-175, Tyr-185, and Arg-222 each bind ATP. Thr-70 is a Mg(2+) binding site. The tract at residues 186–256 (PVSDLKLIAK…IVDNALNKLH (71 aa)) is small ATPAse domain (RuvB-S). Residues 259-338 (ARGLDETDLK…LQIPYQTGLS (80 aa)) form a head domain (RuvB-H) region. DNA-binding residues include Arg-314 and Arg-319.

The protein belongs to the RuvB family. In terms of assembly, homohexamer. Forms an RuvA(8)-RuvB(12)-Holliday junction (HJ) complex. HJ DNA is sandwiched between 2 RuvA tetramers; dsDNA enters through RuvA and exits via RuvB. An RuvB hexamer assembles on each DNA strand where it exits the tetramer. Each RuvB hexamer is contacted by two RuvA subunits (via domain III) on 2 adjacent RuvB subunits; this complex drives branch migration. In the full resolvosome a probable DNA-RuvA(4)-RuvB(12)-RuvC(2) complex forms which resolves the HJ.

The protein resides in the cytoplasm. It carries out the reaction ATP + H2O = ADP + phosphate + H(+). In terms of biological role, the RuvA-RuvB-RuvC complex processes Holliday junction (HJ) DNA during genetic recombination and DNA repair, while the RuvA-RuvB complex plays an important role in the rescue of blocked DNA replication forks via replication fork reversal (RFR). RuvA specifically binds to HJ cruciform DNA, conferring on it an open structure. The RuvB hexamer acts as an ATP-dependent pump, pulling dsDNA into and through the RuvAB complex. RuvB forms 2 homohexamers on either side of HJ DNA bound by 1 or 2 RuvA tetramers; 4 subunits per hexamer contact DNA at a time. Coordinated motions by a converter formed by DNA-disengaged RuvB subunits stimulates ATP hydrolysis and nucleotide exchange. Immobilization of the converter enables RuvB to convert the ATP-contained energy into a lever motion, pulling 2 nucleotides of DNA out of the RuvA tetramer per ATP hydrolyzed, thus driving DNA branch migration. The RuvB motors rotate together with the DNA substrate, which together with the progressing nucleotide cycle form the mechanistic basis for DNA recombination by continuous HJ branch migration. Branch migration allows RuvC to scan DNA until it finds its consensus sequence, where it cleaves and resolves cruciform DNA. The polypeptide is Holliday junction branch migration complex subunit RuvB (Oenococcus oeni (strain ATCC BAA-331 / PSU-1)).